A 239-amino-acid polypeptide reads, in one-letter code: Orotidine 5'-phosphate decarboxylase (239 aa).

Substrate-binding positions include aspartate 15, lysine 37, 64–73 (DLKYHDIPNT), threonine 126, arginine 187, glutamine 196, glycine 216, and arginine 217. Lysine 66 functions as the Proton donor in the catalytic mechanism.

This sequence belongs to the OMP decarboxylase family. Type 1 subfamily. As to quaternary structure, homodimer.

The catalysed reaction is orotidine 5'-phosphate + H(+) = UMP + CO2. The protein operates within pyrimidine metabolism; UMP biosynthesis via de novo pathway; UMP from orotate: step 2/2. Catalyzes the decarboxylation of orotidine 5'-monophosphate (OMP) to uridine 5'-monophosphate (UMP). The protein is Orotidine 5'-phosphate decarboxylase of Geotalea daltonii (strain DSM 22248 / JCM 15807 / FRC-32) (Geobacter daltonii).